The following is a 332-amino-acid chain: Protein EXORDIUM-like 6 (332 aa).

An N-terminal signal peptide occupies residues 1–27 (MAMASASSSSSSISVIIFLLLAPLCLS). 3 N-linked (GlcNAc...) asparagine glycosylation sites follow: asparagine 36, asparagine 102, and asparagine 143.

Belongs to the EXORDIUM family.

The protein localises to the secreted. The protein resides in the extracellular space. It localises to the apoplast. Functionally, may play a role in a brassinosteroid-dependent regulation of growth and development. This Arabidopsis thaliana (Mouse-ear cress) protein is Protein EXORDIUM-like 6 (EXL6).